A 437-amino-acid polypeptide reads, in one-letter code: Aromatic peroxidase fscJ (437 aa).

Residues M1–A19 form the signal peptide. C83 contacts heme.

The protein belongs to the chloroperoxidase family. It depends on heme b as a cofactor.

It functions in the pathway secondary metabolite biosynthesis. Its function is as follows. Aromatic peroxidase; part of the fragmented gene cluster that mediates the biosynthesis of fusarochromene, a tryptophan-derived metabolite closely related to a group of mycotoxins including fusarochromanone. The role of fscJ within the pathway has not been identified yet. The first step of the pathway is the epimerization of L-tryptophan to D-tryptophan in the presence of the NRPS-like tryptophan epimerase fscC. D-tryptophan is subsequently hydroxylated by the tryptophan 6-hydroxylase fscE to yield 6-hydroxytryptophan. The pyrrole ring undergoes cleavaged by the tryptophan 2,3-dioxygenase fscD and is finally converted to 4-hydroxykyrunenine by the hydrolase fscH. The NRPS-like oxidoreductase fscA reduces the carboxyl group to primary alcohol and the DMATS-type prenyltransferase fscG performs prenylation, followed by the formation of a chromene ring catalyzed by the oxidoreductase fscI, which leads to desacetylfusarochromene. Epoxidation by fscF and rearrangement reactions of chromene double bonds convert compound desacetylfusarochromene to fusarochromanones. Although specific acetyltransferases were not found near the fsc gene cluster, several predicted enzymes containing the N-acetyltransferase superfamily domain are present in the genome of F.equiseti. These predicted enzymes may have the potential to convert desacetylfusarochromene to fusarochromene. The chain is Aromatic peroxidase fscJ from Fusarium equiseti (Fusarium scirpi).